Reading from the N-terminus, the 322-residue chain is Transaldolase (322 aa).

Residue K136 is the Schiff-base intermediate with substrate of the active site.

The protein belongs to the transaldolase family. Type 1 subfamily. As to quaternary structure, homodimer.

It localises to the cytoplasm. It catalyses the reaction D-sedoheptulose 7-phosphate + D-glyceraldehyde 3-phosphate = D-erythrose 4-phosphate + beta-D-fructose 6-phosphate. It functions in the pathway carbohydrate degradation; pentose phosphate pathway; D-glyceraldehyde 3-phosphate and beta-D-fructose 6-phosphate from D-ribose 5-phosphate and D-xylulose 5-phosphate (non-oxidative stage): step 2/3. Transaldolase is important for the balance of metabolites in the pentose-phosphate pathway. The polypeptide is Transaldolase (Xanthomonas oryzae pv. oryzae (strain PXO99A)).